The primary structure comprises 203 residues: Tic20 family protein Ycf60 (203 aa).

5 helical membrane passes run 2-22, 51-71, 84-104, 131-151, and 153-173; these read IRLF…RLAI, IIPY…YVLP, ILLP…VTFF, ILLF…PIEF, and ISFI…STIT.

This sequence belongs to the Tic20 family.

The protein resides in the plastid. The protein localises to the chloroplast membrane. This Porphyra purpurea (Red seaweed) protein is Tic20 family protein Ycf60 (ycf60).